Consider the following 772-residue polypeptide: C-Maf-inducing protein (772 aa).

Positions 52–160 (KLLQEGDIQV…WFHSLQWKKK (109 aa)) constitute a PH domain. LRR repeat units follow at residues 662 to 683 (NLENLSLAFTNVTSACAEQLIK), 686 to 706 (SLKQLNLWSTQFGDAGLRVLS), 711 to 731 (TLQVLNLCETPVSDAGLLALS), and 735 to 755 (SLCNLNMNSTKLSADTYEDLK).

It localises to the nucleus. Its subcellular location is the cytoplasm. Functionally, plays a role in T-cell signaling pathway. In Xenopus laevis (African clawed frog), this protein is C-Maf-inducing protein (cmip).